The chain runs to 736 residues: Replication restart protein PriA (736 aa).

One can recognise a Helicase ATP-binding domain in the interval 230–396 (DFKGNISKEN…KEGRIRTFNF (167 aa)). An ATP-binding site is contributed by 243 to 250 (GPTGSGKT). Positions 339–342 (DEEH) match the DEAH box motif. Zn(2+)-binding residues include C452, C455, C461, C464, C479, C482, C492, and C495. Residues 487–643 (GLVESCPRCG…EELERRKALG (157 aa)) enclose the Helicase C-terminal domain.

Belongs to the helicase family. PriA subfamily. Component of the replication restart primosome. Requires Zn(2+) as cofactor.

It carries out the reaction Couples ATP hydrolysis with the unwinding of duplex DNA by translocating in the 3'-5' direction.. It catalyses the reaction ATP + H2O = ADP + phosphate + H(+). Initiates the restart of stalled replication forks, which reloads the replicative helicase on sites other than the origin of replication. Recognizes and binds to abandoned replication forks and remodels them to uncover a helicase loading site. Promotes assembly of the primosome at these replication forks. In Thermotoga maritima (strain ATCC 43589 / DSM 3109 / JCM 10099 / NBRC 100826 / MSB8), this protein is Replication restart protein PriA.